The following is a 305-amino-acid chain: Ankyrin repeat domain-containing protein 23 (305 aa).

Residues 41–72 (QEAVAREKLKLEEEKKKKLERFNSTRFNLDNL) are a coiled coil. Positions 83–92 (KKRLRHRVPP) are enriched in basic residues. The tract at residues 83–104 (KKRLRHRVPPRKPEPLVKPQSQ) is disordered. ANK repeat units lie at residues 143–172 (LHRTALHWACLKGHSQLVNKLLVAGATVDA), 176–205 (LDRTPVFWACRGGHLVILKQLLNQGARVNA), 209–238 (IGSTPLHVAVRTRHPDCLEHLIECGAHLNA), and 242–271 (EGDTALHEAVRHGSYKAMKLLLLYGAELGV). Positions 178–195 (RTPVFWACRGGHLVILKQ) are interaction with TTN.

As to quaternary structure, interacts with titin/TTN and MYPN. In terms of tissue distribution, mainly expressed in heart, skeletal muscle and brown adipose tissues.

It is found in the nucleus. May be involved in the energy metabolism. Could be a molecular link between myofibrillar stretch-induced signaling pathways and muscle gene expression. The protein is Ankyrin repeat domain-containing protein 23 (ANKRD23) of Homo sapiens (Human).